Here is a 334-residue protein sequence, read N- to C-terminus: uncharacterized protein (334 aa).

Residue Tyr52 is the Proton donor of the active site. A disordered region spans residues 314–334 (LPPPASPNSEPQVTGGCSSMC). Residues 320 to 334 (PNSEPQVTGGCSSMC) are compositionally biased toward polar residues.

This sequence belongs to the aldo/keto reductase family.

Its subcellular location is the cytoplasm. The protein resides in the nucleus. This is an uncharacterized protein from Schizosaccharomyces pombe (strain 972 / ATCC 24843) (Fission yeast).